The chain runs to 211 residues: Ribosomal RNA small subunit methyltransferase G (211 aa).

S-adenosyl-L-methionine-binding positions include G73, F78, 124–125 (VE), and R137.

It belongs to the methyltransferase superfamily. RNA methyltransferase RsmG family.

The protein resides in the cytoplasm. Its function is as follows. Specifically methylates the N7 position of a guanine in 16S rRNA. This chain is Ribosomal RNA small subunit methyltransferase G, found in Christiangramia forsetii (strain DSM 17595 / CGMCC 1.15422 / KT0803) (Gramella forsetii).